Here is a 396-residue protein sequence, read N- to C-terminus: Vacuolar protease A (396 aa).

The first 17 residues, 1-17 (MKGALLTAAMLLGSAQA), serve as a signal peptide directing secretion. Positions 18–70 (GVHTMKLKKVPLAEQLESVPIDVQVQHLGQKYTGLRTESHTQAMFKATDAQVS) are cleaved as a propeptide — activation peptide. Positions 85–392 (YFSEITIGTP…DLGADTVGIA (308 aa)) constitute a Peptidase A1 domain. D103 is an active-site residue. An intrachain disulfide couples C116 to C121. An N-linked (GlcNAc...) asparagine glycan is attached at N138. The active site involves D284. A disulfide bridge links C318 with C351. An N-linked (GlcNAc...) asparagine glycan is attached at N335.

This sequence belongs to the peptidase A1 family.

The protein localises to the vacuole. The chain is Vacuolar protease A (pep-4) from Neurospora crassa (strain ATCC 24698 / 74-OR23-1A / CBS 708.71 / DSM 1257 / FGSC 987).